A 258-amino-acid polypeptide reads, in one-letter code: UPF0246 protein HS_0482 (258 aa).

It belongs to the UPF0246 family.

In Histophilus somni (strain 129Pt) (Haemophilus somnus), this protein is UPF0246 protein HS_0482.